Consider the following 485-residue polypeptide: Probable high-affinity nitrate transporter 2.4 (485 aa).

Transmembrane regions (helical) follow at residues 56–76 (WMSLFACFFAAFAAPPILPAM), 80–100 (LVLAPSDASAAAVASLSATLV), 119–139 (GVASLVCALALALAAVFASSP), 147–167 (FVAGLSLANFVANQHWMSRIF), 177–197 (AVAAGWANVGSAAAQVVMPVA), 215–235 (VTYLLPCAMLVTTGLAVLAFP), 270–290 (AWLLGLTYGHCYGVELIMENV), 305–327 (AAGAAAACFGAMNAVARPAGGVA), 341–361 (LWALWAVQSAGAALCVLVGRM), 377–397 (VACAAFVQAASGLTFGIVPFV), 405–425 (VSGMTASGGAVGAIVTNRLFF), and 435–455 (AISCTGITSLLCTLPVALIHF).

It belongs to the major facilitator superfamily. Nitrate/nitrite porter (TC 2.A.1.8) family. In terms of tissue distribution, expressed in the base of the lateral root primordia, root-shoot junction zone, leaves, ends of the husk and vascular tissue of the anthers.

The protein resides in the cell membrane. Functionally, involved in nitrate transport. In Oryza sativa subsp. japonica (Rice), this protein is Probable high-affinity nitrate transporter 2.4 (NRT2.4).